Consider the following 396-residue polypeptide: Elongation factor Tu (396 aa).

The 197-residue stretch at 10–206 folds into the tr-type G domain; the sequence is KPHVNVGTIG…ALDTFIPEPT (197 aa). Residues 19-26 are G1; it reads GHVDHGKT. 19–26 provides a ligand contact to GTP; sequence GHVDHGKT. Position 26 (Thr26) interacts with Mg(2+). Residues 60 to 64 form a G2 region; sequence GITIS. The tract at residues 81–84 is G3; that stretch reads DCPG. Residues 81 to 85 and 136 to 139 each bind GTP; these read DCPGH and NKAD. A G4 region spans residues 136–139; it reads NKAD. The segment at 174 to 176 is G5; it reads SAR.

This sequence belongs to the TRAFAC class translation factor GTPase superfamily. Classic translation factor GTPase family. EF-Tu/EF-1A subfamily. In terms of assembly, monomer.

Its subcellular location is the cytoplasm. The catalysed reaction is GTP + H2O = GDP + phosphate + H(+). Its function is as follows. GTP hydrolase that promotes the GTP-dependent binding of aminoacyl-tRNA to the A-site of ribosomes during protein biosynthesis. The chain is Elongation factor Tu from Xanthomonas oryzae pv. oryzae (strain MAFF 311018).